An 880-amino-acid polypeptide reads, in one-letter code: DNA mismatch repair protein MutS (880 aa).

Position 625-632 (625-632 (GPNMAGKS)) interacts with ATP.

It belongs to the DNA mismatch repair MutS family.

In terms of biological role, this protein is involved in the repair of mismatches in DNA. It is possible that it carries out the mismatch recognition step. This protein has a weak ATPase activity. The protein is DNA mismatch repair protein MutS of Alkaliphilus oremlandii (strain OhILAs) (Clostridium oremlandii (strain OhILAs)).